Here is a 246-residue protein sequence, read N- to C-terminus: MLLGVNIDHIATLRQARYATMLDSFNVEPSVLDAAYAAQRGGADSITLHVRGDRRHMQDADALSVRESVALPLNLEMGNTPEMVDFALRLKPDYICMVPEKREEITTEGGLDAVFHEKDLAPTMARMADNGIQVSLFIDPEVPQVEAAARLGAPMIELHTGCFANHSGRERTEELARLKRAAELAHSLGIQVNAGHGINYQNLEQLLAGVPYLHELNIGHTIVSRALFVGMEQAVREMRQAIDRLS.

Asparagine 6 contributes to the 3-amino-2-oxopropyl phosphate binding site. Residue aspartate 8–histidine 9 participates in 1-deoxy-D-xylulose 5-phosphate binding. 3-amino-2-oxopropyl phosphate is bound at residue arginine 17. Histidine 49 serves as the catalytic Proton acceptor. 1-deoxy-D-xylulose 5-phosphate is bound by residues arginine 51 and histidine 56. Glutamate 76 functions as the Proton acceptor in the catalytic mechanism. Residue threonine 106 participates in 1-deoxy-D-xylulose 5-phosphate binding. Histidine 196 acts as the Proton donor in catalysis. Residues glycine 197 and glycine 219–histidine 220 each bind 3-amino-2-oxopropyl phosphate.

The protein belongs to the PNP synthase family. Homooctamer; tetramer of dimers.

Its subcellular location is the cytoplasm. The catalysed reaction is 3-amino-2-oxopropyl phosphate + 1-deoxy-D-xylulose 5-phosphate = pyridoxine 5'-phosphate + phosphate + 2 H2O + H(+). It functions in the pathway cofactor biosynthesis; pyridoxine 5'-phosphate biosynthesis; pyridoxine 5'-phosphate from D-erythrose 4-phosphate: step 5/5. Functionally, catalyzes the complicated ring closure reaction between the two acyclic compounds 1-deoxy-D-xylulose-5-phosphate (DXP) and 3-amino-2-oxopropyl phosphate (1-amino-acetone-3-phosphate or AAP) to form pyridoxine 5'-phosphate (PNP) and inorganic phosphate. The sequence is that of Pyridoxine 5'-phosphate synthase from Akkermansia muciniphila (strain ATCC BAA-835 / DSM 22959 / JCM 33894 / BCRC 81048 / CCUG 64013 / CIP 107961 / Muc).